We begin with the raw amino-acid sequence, 418 residues long: MIFDKGNVEDFDKELWDAIHAEEERQEHHIELIASENMVSKAVMAAQGSVLTNKYAEGYPGNRYYGGTECVDIVETLAIERAKKLFGAAFANVQAHSGSQANAAAYMALIEAGDTVLGMDLAAGGHLTHGSPVNFSGKTYHFVGYSVDADTEMLNYEAILEQAKAVQPKLIVAGASAYSRNIDFEKFRAIADHVGAYLMVDMAHIAGLVAAGVHPSPVPYAHIVTSTTHKTLRGPRGGLILTNDEALAKKINSAVFPGLQGGPLEHVIAAKAVAFKEALDPAFKDYAQAIIDNTAAMAAVFAQDDRFRLISGGTDNHVFLVDVTKVIANGKLAQNLLDEVNITLNKNAIPFETLSPFNTSGIRIGCAAITSRGMGVKESQTIARLIIKALVNHDQETILEEVRQEVRQLTDAFPLYKK.

(6S)-5,6,7,8-tetrahydrofolate contacts are provided by residues Leu121 and 125 to 127; that span reads GHL. Lys230 bears the N6-(pyridoxal phosphate)lysine mark. 355–357 contributes to the (6S)-5,6,7,8-tetrahydrofolate binding site; the sequence is SPF.

This sequence belongs to the SHMT family. As to quaternary structure, homodimer. Pyridoxal 5'-phosphate serves as cofactor.

It is found in the cytoplasm. It carries out the reaction (6R)-5,10-methylene-5,6,7,8-tetrahydrofolate + glycine + H2O = (6S)-5,6,7,8-tetrahydrofolate + L-serine. It functions in the pathway one-carbon metabolism; tetrahydrofolate interconversion. It participates in amino-acid biosynthesis; glycine biosynthesis; glycine from L-serine: step 1/1. In terms of biological role, catalyzes the reversible interconversion of serine and glycine with tetrahydrofolate (THF) serving as the one-carbon carrier. This reaction serves as the major source of one-carbon groups required for the biosynthesis of purines, thymidylate, methionine, and other important biomolecules. Also exhibits THF-independent aldolase activity toward beta-hydroxyamino acids, producing glycine and aldehydes, via a retro-aldol mechanism. This Streptococcus pyogenes serotype M3 (strain ATCC BAA-595 / MGAS315) protein is Serine hydroxymethyltransferase.